The chain runs to 535 residues: Cytochrome P450 monooxygenase claP (535 aa).

Transmembrane regions (helical) follow at residues 7–27 and 225–245; these read IGTL…KLVG and YFSM…KLPT. Heme is bound at residue Cys-472.

Belongs to the cytochrome P450 family. Requires heme as cofactor.

Its subcellular location is the membrane. It functions in the pathway secondary metabolite biosynthesis; terpenoid biosynthesis. Functionally, cytochrome P450 monooxygenase; part of the gene cluster that mediates the biosynthesis of clavilactone A, a meroterpenoid that features a unique benzo-fused ten-membered carbocyclic ring unit with an alpha,beta-epoxy-gamma-lactone moiety, forming an intriguing 10/5/3 tricyclic nested skeleton. Cytochrome P450 monooxygenases claO, claP, claQ, claU, and claW are close orthologs, suggesting that a redundant function or pseudogenes are present in the cla cluster. These monoxygenases are not involved in clavilactone A biosynthesis nor its modification. ClaR, ClaS and ClaT are sufficient to produce clavilactone A. The biosynthesis begins with the prenyltransferase claS that transfers geranyl pyrophosphate (GPP) to hydroquinone to produces geranylhydroquinone. The cytochrome P450 monooxygenase claR then catalyzes the diradical coupling reaction between the intramolecular hydroquinone and allyl moieties to form the benzo-fused ten-membered carbocyclic ring unit of wigantol. Finally the cytochrome P450 monooxygenase claT exquisitely and stereoselectively assembles the alpha,beta-epoxy-gamma-lactone moiety, producing clavilactone A via arnebinol A. The protein is Cytochrome P450 monooxygenase claP of Ampulloclitocybe clavipes (Club foot).